The primary structure comprises 195 residues: NADH-ubiquinone oxidoreductase subunit 9 (195 aa).

It belongs to the complex I 30 kDa subunit family. Complex I is composed of about 30 different subunits.

It is found in the mitochondrion inner membrane. It carries out the reaction a ubiquinone + NADH + 5 H(+)(in) = a ubiquinol + NAD(+) + 4 H(+)(out). Functionally, core subunit of the mitochondrial membrane respiratory chain NADH dehydrogenase (Complex I) that is believed to belong to the minimal assembly required for catalysis. Complex I functions in the transfer of electrons from NADH to the respiratory chain. The immediate electron acceptor for the enzyme is believed to be ubiquinone. The sequence is that of NADH-ubiquinone oxidoreductase subunit 9 (NAD9) from Acanthamoeba castellanii (Amoeba).